A 341-amino-acid polypeptide reads, in one-letter code: MTTYKDAGVNIEEGYKAVNLIKNIAKETFDSNVITDIGSFGSMYLLNIENSDYILVSGTDGVGTKLKIAFYMDKHDTVGIDCVAMCVNDILCHGAKPLFFLDYIACGKLKSEKVATIVKGVAEGCKIAGCSLVGGETAEMPGFYREEEYDLAGFAVGLVKKDLAICGQDVKEGDILIGLASNGVHSNGYSLVRKVFGIDENPKVLTKVYEELNLSLGEELLKPTRIYVKPVLKVLEKIKIKGIAHITGGGFFENIPRAFPKGFVAVIEKGTWNILPIFRLIQKYSKVDDNEMFSTFNMGIGMVLIVSKDDVETAMEILNEEGINSYVIGTIEKGEGGVVLR.

This sequence belongs to the AIR synthase family.

It localises to the cytoplasm. It carries out the reaction 2-formamido-N(1)-(5-O-phospho-beta-D-ribosyl)acetamidine + ATP = 5-amino-1-(5-phospho-beta-D-ribosyl)imidazole + ADP + phosphate + H(+). Its pathway is purine metabolism; IMP biosynthesis via de novo pathway; 5-amino-1-(5-phospho-D-ribosyl)imidazole from N(2)-formyl-N(1)-(5-phospho-D-ribosyl)glycinamide: step 2/2. The sequence is that of Phosphoribosylformylglycinamidine cyclo-ligase from Caldicellulosiruptor saccharolyticus (strain ATCC 43494 / DSM 8903 / Tp8T 6331).